Consider the following 423-residue polypeptide: UPF0229 protein PST_0721 (423 aa).

The tract at residues 84-109 (AGERIPRPQGGGGGQGAGQASNSGEG) is disordered.

The protein belongs to the UPF0229 family.

The sequence is that of UPF0229 protein PST_0721 from Stutzerimonas stutzeri (strain A1501) (Pseudomonas stutzeri).